Reading from the N-terminus, the 1349-residue chain is Zinc finger protein 804B (1349 aa).

The C2H2-type zinc-finger motif lies at 55–79 (FYCELCDKQYHKHQEFDNHINSYDH). Residues 985–1010 (YASESRNDQDSAIPRTTEKDKSKSSH) are disordered.

The polypeptide is Zinc finger protein 804B (ZNF804B) (Homo sapiens (Human)).